The chain runs to 139 residues: Bilirubin-inducible fluorescent protein UnaG (139 aa).

(4Z,15Z)-bilirubin IXalpha contacts are provided by residues Asn-57, Thr-61, Ser-80, Arg-112, and 132 to 134 (RSY).

The protein belongs to the calycin superfamily. Fatty-acid binding protein (FABP) family. Monomer. Detected in small-diameter muscle fibers from the white muscle layer from juvenile animals (glass eels) (at protein level). Detected in small-diameter muscle fibers from juvenile animals (glass eels).

It localises to the cytoplasm. Beta-barrel protein that binds unconjugated bilirubin with high affinity. Excitation of the bilirubin-bound protein gives rise to green fluorescence, both under normoxia and hypoxia. The apoprotein is not fluorescent. Does not emit fluorescence in the presence of ditauro-bilirubin, urobilin or biliverdin. The polypeptide is Bilirubin-inducible fluorescent protein UnaG (Anguilla japonica (Japanese eel)).